Consider the following 842-residue polypeptide: Alanine--tRNA ligase (842 aa).

Zn(2+) is bound by residues His-549, His-553, Cys-650, and His-654.

This sequence belongs to the class-II aminoacyl-tRNA synthetase family. The cofactor is Zn(2+).

It is found in the cytoplasm. The enzyme catalyses tRNA(Ala) + L-alanine + ATP = L-alanyl-tRNA(Ala) + AMP + diphosphate. Its function is as follows. Catalyzes the attachment of alanine to tRNA(Ala) in a two-step reaction: alanine is first activated by ATP to form Ala-AMP and then transferred to the acceptor end of tRNA(Ala). Also edits incorrectly charged Ser-tRNA(Ala) and Gly-tRNA(Ala) via its editing domain. In Campylobacter jejuni subsp. jejuni serotype O:23/36 (strain 81-176), this protein is Alanine--tRNA ligase.